The following is a 92-amino-acid chain: Protease inhibitors (92 aa).

The signal sequence occupies residues 1–19 (MKFALALCAAVLLVVLVQA). 2 Pacifastin domains span residues 20–54 (EEKCTPGQVKQQDCNTCTCTPTGVWGCTRKGCQPA) and 57–92 (EISCEPGKTFKDKCNTCRCGADGKSAACTLKACPNQ). 6 cysteine pairs are disulfide-bonded: cysteine 23–cysteine 38, cysteine 33–cysteine 51, cysteine 36–cysteine 46, cysteine 60–cysteine 75, cysteine 70–cysteine 89, and cysteine 73–cysteine 84. The O-linked (Fuc) threonine glycan is linked to threonine 65.

Belongs to the protease inhibitor I19 family. In terms of tissue distribution, brain and fat body.

It localises to the secreted. In terms of biological role, both LCMI I and II are inhibitors of chymotrypsin and elastase (in vitro). They both inhibit the prophenol oxidase activation cascade. The chain is Protease inhibitors from Locusta migratoria (Migratory locust).